The primary structure comprises 325 residues: Solute-binding protein Bpro_4736 (325 aa).

Positions 1 to 27 (MKTRTLKVLKPTLALLLAASFSAGALA) are cleaved as a signal peptide. 168 to 173 (RISPVY) lines the phenylglyoxylate pocket.

It belongs to the bacterial solute-binding protein 7 family. The complex is comprised of an extracytoplasmic solute-binding protein and a heteromeric permease formed by two transmembrane proteins.

The protein resides in the periplasm. In terms of biological role, solute-binding protein that binds phenylglyoxylate (in vitro). Probably part of a tripartite ATP-independent periplasmic (TRAP) transport system that mediates solute transport into the cytoplasm. In Polaromonas sp. (strain JS666 / ATCC BAA-500), this protein is Solute-binding protein Bpro_4736.